A 268-amino-acid polypeptide reads, in one-letter code: Undecaprenyl-diphosphatase (268 aa).

A run of 6 helical transmembrane segments spans residues 39–59 (SETF…LIYK), 75–95 (LPYF…GLWV), 106–126 (LGPV…TEKV), 179–199 (TEFA…FAWI), 214–234 (LTLA…VKWL), and 243–263 (FIPF…LVAL).

Belongs to the UppP family.

It localises to the cell inner membrane. It catalyses the reaction di-trans,octa-cis-undecaprenyl diphosphate + H2O = di-trans,octa-cis-undecaprenyl phosphate + phosphate + H(+). In terms of biological role, catalyzes the dephosphorylation of undecaprenyl diphosphate (UPP). Confers resistance to bacitracin. This chain is Undecaprenyl-diphosphatase, found in Methylacidiphilum infernorum (isolate V4) (Methylokorus infernorum (strain V4)).